The primary structure comprises 489 residues: UDP-N-acetylmuramoyl-L-alanyl-D-glutamate--2,6-diaminopimelate ligase (489 aa).

S30 is a binding site for UDP-N-acetyl-alpha-D-muramoyl-L-alanyl-D-glutamate. 108–114 (GTNGKTT) lines the ATP pocket. UDP-N-acetyl-alpha-D-muramoyl-L-alanyl-D-glutamate-binding positions include N149, 150–151 (TT), S177, Q183, and R185. At K217 the chain carries N6-carboxylysine. Meso-2,6-diaminopimelate is bound by residues R383, 407 to 410 (DNPR), G459, and E463. Residues 407–410 (DNPR) carry the Meso-diaminopimelate recognition motif motif.

It belongs to the MurCDEF family. MurE subfamily. The cofactor is Mg(2+). Post-translationally, carboxylation is probably crucial for Mg(2+) binding and, consequently, for the gamma-phosphate positioning of ATP.

It is found in the cytoplasm. It carries out the reaction UDP-N-acetyl-alpha-D-muramoyl-L-alanyl-D-glutamate + meso-2,6-diaminopimelate + ATP = UDP-N-acetyl-alpha-D-muramoyl-L-alanyl-gamma-D-glutamyl-meso-2,6-diaminopimelate + ADP + phosphate + H(+). It participates in cell wall biogenesis; peptidoglycan biosynthesis. Catalyzes the addition of meso-diaminopimelic acid to the nucleotide precursor UDP-N-acetylmuramoyl-L-alanyl-D-glutamate (UMAG) in the biosynthesis of bacterial cell-wall peptidoglycan. The protein is UDP-N-acetylmuramoyl-L-alanyl-D-glutamate--2,6-diaminopimelate ligase of Geobacillus kaustophilus (strain HTA426).